Reading from the N-terminus, the 208-residue chain is Ribosomal RNA large subunit methyltransferase E (208 aa).

Residues glycine 62, tryptophan 64, aspartate 82, aspartate 98, and aspartate 123 each coordinate S-adenosyl-L-methionine. The active-site Proton acceptor is the lysine 163.

It belongs to the class I-like SAM-binding methyltransferase superfamily. RNA methyltransferase RlmE family.

The protein localises to the cytoplasm. It carries out the reaction uridine(2552) in 23S rRNA + S-adenosyl-L-methionine = 2'-O-methyluridine(2552) in 23S rRNA + S-adenosyl-L-homocysteine + H(+). Functionally, specifically methylates the uridine in position 2552 of 23S rRNA at the 2'-O position of the ribose in the fully assembled 50S ribosomal subunit. This Actinobacillus succinogenes (strain ATCC 55618 / DSM 22257 / CCUG 43843 / 130Z) protein is Ribosomal RNA large subunit methyltransferase E.